The chain runs to 970 residues: Cullin-4B (970 aa).

A compositionally biased stretch (basic and acidic residues) spans 1–14 (MSRSTRSKERREND). 2 disordered regions span residues 1–157 (MSRS…SFCL) and 189–211 (AEES…QQQQ). Threonine 15 carries the phosphothreonine modification. Serine 17 carries the phosphoserine modification. Pro residues predominate over residues 36–57 (PPRPPYPPLLPPVFPPPTPPPQ). Positions 78–98 (SGFSSPNPSAASAAAQEVRSA) are enriched in low complexity. Polar residues predominate over residues 99–109 (TDGNTSTTPPT). Phosphothreonine is present on threonine 106. Serine 110 bears the Phosphoserine mark. The Nuclear localization signal signature appears at 112–115 (KKRK). Positions 117–126 (NSSSSSSNSS) are enriched in low complexity. Residues 146-155 (DSASPSTSSF) are compositionally biased toward polar residues. A phosphoserine mark is found at serine 154 and serine 200. Positions 192 to 211 (SSSSSSSSSPTAATSQQQQQ) are enriched in low complexity. The residue at position 202 (threonine 202) is a Phosphothreonine. Lysine 247 participates in a covalent cross-link: Glycyl lysine isopeptide (Lys-Gly) (interchain with G-Cter in ubiquitin). Serine 250 is modified (phosphoserine). The 61-residue stretch at 902 to 962 (DRQYQIDAAI…RDYMERDKEN (61 aa)) folds into the Cullin neddylation domain. Lysine 916 participates in a covalent cross-link: Glycyl lysine isopeptide (Lys-Gly) (interchain with G-Cter in NEDD8).

It belongs to the cullin family. Component of multiple DCX (DDB1-CUL4-X-box) E3 ubiquitin-protein ligase complexes that seem to be formed of DDB1, CUL4A or CUL4B, RBX1 and a variable substrate recognition component which seems to belong to a protein family described as DCAF (Ddb1- and Cul4-associated factor) or CDW (CUL4-DDB1-associated WD40-repeat) proteins. Component of the DCX(DTL) complex with the putative substrate recognition component DTL. Component of the DCX(DDB2) complex with the putative substrate recognition component DDB2. Component of DCX complexes part of the DesCEND (destruction via C-end degrons) pathway, which contain either TRPC4AP or DCAF12 as substrate-recognition component. Component of the DCX(AMBRA1) complex with the substrate recognition component AMBRA1. Part of a complex with RBX1 and TIP120A/CAND1. Component of the DCX(WDR77) complex, composed of Cul4b, Ddb1, Wdr77 and Rbx1. Interacts with RBX1, GRWD1, MLST8, SMU1, TLE2, TLE3, DCAF1, DDA1, DCAF6, DCAF17, DDB2, DCAF8, TIP120A/CAND1 and TMEM113. Interacts with cyclin E (CCNE1 or CCNE2) and with importins alpha-1 (KPNA2), alpha-3 (KPNA4), alpha-5 (KPNA1) and beta-1 (KPNB1). May interact with WDR26, WDR51B, SNRNP40, WDR61, WDR76 and WDR5. Interacts (unneddylated form) with DCUN1D1, DCUN1D2, DCUN1D3, DCUN1D4 and DCUN1D5; these interactions promote the cullin neddylation. In terms of processing, neddylated. Deneddylated via its interaction with the COP9 signalosome (CSN) complex. Expressed in oocytes (at protein level).

Its subcellular location is the cytoplasm. It is found in the nucleus. The protein operates within protein modification; protein ubiquitination. Core component of multiple cullin-RING-based E3 ubiquitin-protein ligase complexes which mediate the ubiquitination and subsequent proteasomal degradation of target proteins. The functional specificity of the E3 ubiquitin-protein ligase complex depends on the variable substrate recognition subunit. CUL4B may act within the complex as a scaffold protein, contributing to catalysis through positioning of the substrate and the ubiquitin-conjugating enzyme. Plays a role as part of the E3 ubiquitin-protein ligase complex in polyubiquitination of CDT1, histone H2A, histone H3 and histone H4 in response to radiation-induced DNA damage. Targeted to UV damaged chromatin by DDB2 and may be important for DNA repair and DNA replication. A number of DCX complexes (containing either TRPC4AP or DCAF12 as substrate-recognition component) are part of the DesCEND (destruction via C-end degrons) pathway, which recognizes a C-degron located at the extreme C terminus of target proteins, leading to their ubiquitination and degradation. The DCX(AMBRA1) complex is a master regulator of the transition from G1 to S cell phase by mediating ubiquitination of phosphorylated cyclin-D (CCND1, CCND2 and CCND3). The DCX(AMBRA1) complex also acts as a regulator of Cul5-RING (CRL5) E3 ubiquitin-protein ligase complexes by mediating ubiquitination and degradation of Elongin-C (ELOC) component of CRL5 complexes. Required for ubiquitination of cyclin E (CCNE1 or CCNE2), and consequently, normal G1 cell cycle progression. Component of the DCX(WDR77) complex, which mediates ubiquitination and degradation of Irgm1 in intestinal cells. Regulates the mammalian target-of-rapamycin (mTOR) pathway involved in control of cell growth, size and metabolism. Specific CUL4B regulation of the mTORC1-mediated pathway is dependent upon 26S proteasome function and requires interaction between CUL4B and MLST8. With CUL4A, contributes to ribosome biogenesis. In Mus musculus (Mouse), this protein is Cullin-4B.